The following is a 179-amino-acid chain: Adenine phosphoribosyltransferase (179 aa).

Belongs to the purine/pyrimidine phosphoribosyltransferase family. Homodimer.

It localises to the cytoplasm. The enzyme catalyses AMP + diphosphate = 5-phospho-alpha-D-ribose 1-diphosphate + adenine. It participates in purine metabolism; AMP biosynthesis via salvage pathway; AMP from adenine: step 1/1. Its function is as follows. Catalyzes a salvage reaction resulting in the formation of AMP, that is energically less costly than de novo synthesis. This Beijerinckia indica subsp. indica (strain ATCC 9039 / DSM 1715 / NCIMB 8712) protein is Adenine phosphoribosyltransferase.